Reading from the N-terminus, the 425-residue chain is D-amino acid dehydrogenase (425 aa).

V3–Y17 contributes to the FAD binding site.

It belongs to the DadA oxidoreductase family. FAD is required as a cofactor.

It carries out the reaction a D-alpha-amino acid + A + H2O = a 2-oxocarboxylate + AH2 + NH4(+). It participates in amino-acid degradation; D-alanine degradation; NH(3) and pyruvate from D-alanine: step 1/1. Oxidative deamination of D-amino acids. In Rhodopseudomonas palustris (strain HaA2), this protein is D-amino acid dehydrogenase.